Reading from the N-terminus, the 169-residue chain is Putative pre-16S rRNA nuclease (169 aa).

Positions 1 to 19 are enriched in basic and acidic residues; sequence MTDSDHRLPDRPGEGDPGR. The segment at 1 to 24 is disordered; it reads MTDSDHRLPDRPGEGDPGRGRRIG.

This sequence belongs to the YqgF nuclease family.

It localises to the cytoplasm. Its function is as follows. Could be a nuclease involved in processing of the 5'-end of pre-16S rRNA. This chain is Putative pre-16S rRNA nuclease, found in Mycobacterium sp. (strain KMS).